Consider the following 388-residue polypeptide: Mitochondrial distribution and morphology protein 12 (388 aa).

In terms of domain architecture, SMP-LTD spans 1–388 (MSLDINWSLL…VFPNFHTVAL (388 aa)). Disordered stretches follow at residues 75–101 (DDEG…RNEA) and 209–249 (PMSI…KVSS). Residues 83 to 101 (EEKQREKEREERDKLRNEA) show a composition bias toward basic and acidic residues. Residues 234–243 (PSPPAHPAGL) show a composition bias toward pro residues.

Belongs to the MDM12 family. As to quaternary structure, component of the ER-mitochondria encounter structure (ERMES) or MDM complex, composed of MMM1, MDM10, MDM12 and MDM34. An MMM1 homodimer associates with one molecule of MDM12 on each side in a pairwise head-to-tail manner, and the SMP-LTD domains of MMM1 and MDM12 generate a continuous hydrophobic tunnel for phospholipid trafficking.

It localises to the mitochondrion outer membrane. The protein localises to the endoplasmic reticulum membrane. Functionally, component of the ERMES/MDM complex, which serves as a molecular tether to connect the endoplasmic reticulum (ER) and mitochondria. Components of this complex are involved in the control of mitochondrial shape and protein biogenesis, and function in nonvesicular lipid trafficking between the ER and mitochondria. MDM12 is required for the interaction of the ER-resident membrane protein MMM1 and the outer mitochondrial membrane-resident beta-barrel protein MDM10. The MDM12-MMM1 subcomplex functions in the major beta-barrel assembly pathway that is responsible for biogenesis of all mitochondrial outer membrane beta-barrel proteins, and acts in a late step after the SAM complex. The MDM10-MDM12-MMM1 subcomplex further acts in the TOM40-specific pathway after the action of the MDM12-MMM1 complex. Essential for establishing and maintaining the structure of mitochondria and maintenance of mtDNA nucleoids. This Cryptococcus neoformans var. neoformans serotype D (strain JEC21 / ATCC MYA-565) (Filobasidiella neoformans) protein is Mitochondrial distribution and morphology protein 12.